The chain runs to 98 residues: Ferredoxin-like protein (98 aa).

This sequence to ferredoxins from P.putida and C.tartarivorum, ferredoxin I from A.vinelandii, ferredoxin II from D.desulfuricans.

Its function is as follows. Could be a 3Fe-4S cluster-containing protein. The sequence is that of Ferredoxin-like protein (fixX) from Rhizobium leguminosarum bv. trifolii.